The following is a 416-amino-acid chain: Signal recognition particle receptor FtsY (416 aa).

A compositionally biased stretch (basic residues) spans 1 to 10 (MFSFFRRKKK). The segment at 1–24 (MFSFFRRKKKQETPALEEAQVQET) is disordered. GTP is bound by residues 224–231 (GINGAGKT), 304–308 (DTAGR), and 368–371 (TKLD).

This sequence belongs to the GTP-binding SRP family. FtsY subfamily. As to quaternary structure, part of the signal recognition particle protein translocation system, which is composed of SRP and FtsY. SRP is a ribonucleoprotein composed of Ffh and a 4.5S RNA molecule. Requires Mg(2+) as cofactor.

It localises to the cell membrane. The protein resides in the cytoplasm. The enzyme catalyses GTP + H2O = GDP + phosphate + H(+). Its function is as follows. Involved in targeting and insertion of nascent membrane proteins into the cytoplasmic membrane. Acts as a receptor for the complex formed by the signal recognition particle (SRP) and the ribosome-nascent chain (RNC). Interaction with SRP-RNC leads to the transfer of the RNC complex to the Sec translocase for insertion into the membrane, the hydrolysis of GTP by both Ffh and FtsY, and the dissociation of the SRP-FtsY complex into the individual components. This Neisseria gonorrhoeae protein is Signal recognition particle receptor FtsY.